We begin with the raw amino-acid sequence, 187 residues long: Adenylate kinase (187 aa).

10 to 15 is a binding site for ATP; it reads GSGKGT. The segment at 30–59 is NMP; sequence STGDLLRSEVVAGTPLGLQAKQVMAQGDLV. Residues threonine 31, arginine 36, 57 to 59, 85 to 88, and glutamine 92 contribute to the AMP site; these read DLV and GYPR. Residues 126–136 are LID; sequence GRAQAEGREDD. ATP is bound at residue arginine 127. 2 residues coordinate AMP: arginine 133 and arginine 144. Position 172 (glycine 172) interacts with ATP.

It belongs to the adenylate kinase family. In terms of assembly, monomer.

It is found in the cytoplasm. It catalyses the reaction AMP + ATP = 2 ADP. It participates in purine metabolism; AMP biosynthesis via salvage pathway; AMP from ADP: step 1/1. In terms of biological role, catalyzes the reversible transfer of the terminal phosphate group between ATP and AMP. Plays an important role in cellular energy homeostasis and in adenine nucleotide metabolism. The chain is Adenylate kinase from Xylella fastidiosa (strain M23).